The chain runs to 201 residues: 3-isopropylmalate dehydratase small subunit (201 aa).

It belongs to the LeuD family. LeuD type 1 subfamily. In terms of assembly, heterodimer of LeuC and LeuD.

It catalyses the reaction (2R,3S)-3-isopropylmalate = (2S)-2-isopropylmalate. Its pathway is amino-acid biosynthesis; L-leucine biosynthesis; L-leucine from 3-methyl-2-oxobutanoate: step 2/4. Catalyzes the isomerization between 2-isopropylmalate and 3-isopropylmalate, via the formation of 2-isopropylmaleate. This is 3-isopropylmalate dehydratase small subunit from Cronobacter sakazakii (strain ATCC BAA-894) (Enterobacter sakazakii).